We begin with the raw amino-acid sequence, 510 residues long: Major facilitator superfamily domain-containing protein 8 (510 aa).

At 1-38 (MASIDDDDDERTPLLQDSHIGELVETQKQLKSRWWSIR) the chain is on the cytoplasmic side. Positions 14-15 (LL) match the Dileucine internalization motif motif. The chain crosses the membrane as a helical span at residues 39-59 (VMYLTMFLSSVGFSIVMTSIW). The Extracellular portion of the chain corresponds to 60–72 (PYLQKVDQSADAS). A helical transmembrane segment spans residues 73-93 (FLGWVIASFSLGQMVASPLFG). Residues 94–103 (LWSNHRPRRE) are Cytoplasmic-facing. A helical transmembrane segment spans residues 104–124 (PLVVSITILVAASCLYAYVHV). Over 125 to 132 (PASHNKYY) the chain is Extracellular. Residues 133-155 (MLLARTFVGFGSGNVAVVRSYVA) traverse the membrane as a helical segment. Residues 156–171 (GATSLSERTGAMANIS) lie on the Cytoplasmic side of the membrane. Residues 172 to 192 (AFQAMGFILGPAFQAALSVIG) form a helical membrane-spanning segment. Residues 193 to 209 (ETGITINGISLQVNMYT) are Extracellular-facing. Residues 210–230 (APALMGALLGIGNIILIFAIF) traverse the membrane as a helical segment. The Cytoplasmic portion of the chain corresponds to 231-264 (REHRVDDLEKNVSSINSESEVTDVEKANEGPIDQ). The helical transmembrane segment at 265 to 285 (IAVISSNILFFVVLFVFAIFE) threads the bilayer. Over 286–302 (TISTPLTMDMYAWTRTQ) the chain is Extracellular. Residues 303–323 (AVFYNGIILAAVGVESVIVFL) form a helical membrane-spanning segment. Topologically, residues 324-335 (TVKILCKKTGER) are cytoplasmic. Residues 336–356 (VLLLGGLAVIWIGFFILLPWG) form a helical membrane-spanning segment. Over 357–406 (NQMPKIQWTDLQNATIHNTTQWTSSIPSSGNHSVEPTGCPVIQTWCLYTP) the chain is Extracellular. 2 N-linked (GlcNAc...) asparagine glycosylation sites follow: Asn-369 and Asn-374. A helical transmembrane segment spans residues 407–427 (VIHLAQYLTSDILIGVGYPIC). Topologically, residues 428–445 (NVMSYTLYSKIIGPKPQG) are cytoplasmic. A helical transmembrane segment spans residues 446-466 (LYMGWLTAAGSAARTLGPVFV). The Extracellular portion of the chain corresponds to 467 to 476 (SQIYTHLGTR). A helical transmembrane segment spans residues 477 to 497 (WTFGIICAFVALSLLHLTAVY). At 498 to 510 (KRLIPFSTRYERL) the chain is on the cytoplasmic side.

The protein belongs to the major facilitator superfamily.

It localises to the lysosome membrane. May be a carrier that transport small solutes by using chemiosmotic ion gradients. The polypeptide is Major facilitator superfamily domain-containing protein 8 (mfsd8) (Xenopus laevis (African clawed frog)).